The chain runs to 398 residues: Lysophospholipid transporter LplT (398 aa).

11 helical membrane-spanning segments follow: residues 19–39 (VIAA…ATLA), 53–73 (ILQM…GQVA), 91–111 (LGAA…LVGI), 139–159 (LMEA…GVLA), 164–184 (IAAL…NLFI), 227–247 (LFWG…PVAL), 257–277 (YLNA…AKLV), 281–301 (TVAR…IFSL), 304–324 (ALLP…FFVV), 350–370 (GENS…LVGI), and 372–392 (VVAI…ALWI).

This sequence belongs to the major facilitator superfamily. LplT (TC 2.A.1.42) family.

It localises to the cell inner membrane. In terms of biological role, catalyzes the facilitated diffusion of 2-acyl-glycero-3-phosphoethanolamine (2-acyl-GPE) into the cell. This is Lysophospholipid transporter LplT from Citrobacter koseri (strain ATCC BAA-895 / CDC 4225-83 / SGSC4696).